Consider the following 253-residue polypeptide: Zinc finger protein GIS (253 aa).

Acidic residues predominate over residues 1–10 (MDEATGETET). The segment at 1 to 85 (MDEATGETET…GDNSTDNNSI (85 aa)) is disordered. 3 stretches are compositionally biased toward polar residues: residues 11 to 21 (QDFMNVESFSQ), 49 to 63 (SITT…PYQT), and 76 to 85 (GDNSTDNNSI). The C2H2-type zinc-finger motif lies at 91–113 (FECHYCFRNFPTSQALGGHQNAH).

As to expression, expressed in inflorescence meristems, floral meristems and stem epidermis.

It is found in the nucleus. Functionally, probable transcription factor required for the initiation of inflorescence trichomes in response to gibberellin (GA). Mediates the induction of GL1 expression by GA in inflorescence organs and is antagonized in its action by the DELLA repressor GAI. Acts upstream of the trichome initiation regulators GL1 and GL3, and downstream of the GA signaling repressor SPINDLY (SPY). Does not play a significant role in the cytokinin response. Controls trichome branching through GA signaling. Acts downstream of the key regulator STICHEL (STI) in an endoreduplication-independent pathway. Controls trichome cell division indirectly by acting downstream of a key endoreduplication regulator SIAMESE (SIM). This Arabidopsis thaliana (Mouse-ear cress) protein is Zinc finger protein GIS (GIS).